Here is a 471-residue protein sequence, read N- to C-terminus: FAD-dependent monooxygenase andE (471 aa).

The FAD site is built by E35, G49, and R108. Residue Y216 is part of the active site. FAD-binding residues include D308 and A321. A run of 2 helical transmembrane segments spans residues 403–423 (LANI…LPFP) and 443–463 (TPFA…LLGL).

This sequence belongs to the paxM FAD-dependent monooxygenase family. It depends on FAD as a cofactor.

It localises to the membrane. The protein operates within secondary metabolite biosynthesis; terpenoid biosynthesis. In terms of biological role, FAD-dependent monooxygenase; part of the gene cluster that mediates the biosynthesis of anditomin, a fungal meroterpenoid. The first step of the pathway is the synthesis of 3,5-dimethylorsellinic acid (DMOA) by the polyketide synthase andM. DMOA is then converted to the phthalide compound 5,7-dihydroxy-4,6-dimethylphthalide (DHDMP) by the cytochrome P450 monooxygenase andK, which is further prenylated by the prenyltransferase andD to yield farnesyl-DHDMP. Further epoxidation by the FAD-dependent monooxygenase andE leads to epoxyfarnesyl-DHDMP. The next step involves the terpene cyclase andB that converts epoxyfarnesyl-DHDMP into preandiloid A through opening of the epoxide ring followed by the cyclization of the farnesyl moiety. Preandiloid A is in turn oxidized at the C-3 hydroxyl group to yield preandiloid B by the dehydrogenase andC. The dioxygenase andA is solely responsible for the dehydrogenation of preandiloid B leading to the enone preandiloid C, as well as for the intriguing structural rearrangement to generate the bicyclo[2.2.2]octane core, transforming preandiloid C into andiconin. FAD-binding monooxygenase andJ then produces andilesin D which is reduced by dehydrogenase andI to yield andilesin A. Action of acetyltransferase andG followed by a spontaneous acetate elimination leads then to andilesin B, which is in turn substrate of the short chain dehydrogenase andH to yield andilesin C. Finally, the dioxygenase andF catalyzes the transformation of andilesin C to anditomin. This is FAD-dependent monooxygenase andE from Emericella variicolor (Aspergillus stellatus).